Reading from the N-terminus, the 346-residue chain is UDP-3-O-acylglucosamine N-acyltransferase (346 aa).

His-240 acts as the Proton acceptor in catalysis.

Belongs to the transferase hexapeptide repeat family. LpxD subfamily. As to quaternary structure, homotrimer.

The enzyme catalyses a UDP-3-O-[(3R)-3-hydroxyacyl]-alpha-D-glucosamine + a (3R)-hydroxyacyl-[ACP] = a UDP-2-N,3-O-bis[(3R)-3-hydroxyacyl]-alpha-D-glucosamine + holo-[ACP] + H(+). Its pathway is bacterial outer membrane biogenesis; LPS lipid A biosynthesis. Catalyzes the N-acylation of UDP-3-O-acylglucosamine using 3-hydroxyacyl-ACP as the acyl donor. Is involved in the biosynthesis of lipid A, a phosphorylated glycolipid that anchors the lipopolysaccharide to the outer membrane of the cell. This chain is UDP-3-O-acylglucosamine N-acyltransferase, found in Bacteroides thetaiotaomicron (strain ATCC 29148 / DSM 2079 / JCM 5827 / CCUG 10774 / NCTC 10582 / VPI-5482 / E50).